Here is a 2314-residue protein sequence, read N- to C-terminus: Protein Ycf2 (2314 aa).

Residue 1653–1660 (GSIGTGRS) coordinates ATP.

This sequence belongs to the Ycf2 family.

It is found in the plastid. The protein localises to the chloroplast stroma. Functionally, probable ATPase of unknown function. Its presence in a non-photosynthetic plant (Epifagus virginiana) and experiments in tobacco indicate that it has an essential function which is probably not related to photosynthesis. The protein is Protein Ycf2 of Piper cenocladum (Ant piper).